The following is a 463-amino-acid chain: Probable mannan endo-1,4-beta-mannosidase F (463 aa).

Positions 1–18 (MRSLSSIALLSVVGAASA) are cleaved as a signal peptide. One can recognise a CBM1 domain in the interval 19-54 (QAGPWAQCGGKSFSGSSECASGWKCQELNEWFSQCV). The disordered stretch occupies residues 57 to 78 (AESTTPTVSSTPTPTDAPSVSI). The span at 59–77 (STTPTVSSTPTPTDAPSVS) shows a compositional bias: low complexity. Residues 75–118 (SVSITASVTTGINKSISVSSASKSTPLPSSSSASPSPRPTGSGS) are ser-rich linker. The N-linked (GlcNAc...) asparagine glycan is linked to Asn87. Residues 93-118 (SSASKSTPLPSSSSASPSPRPTGSGS) are compositionally biased toward low complexity. Residues 93–121 (SSASKSTPLPSSSSASPSPRPTGSGSFAK) are disordered. Positions 119 to 463 (FAKADGLQFS…MDHMENVNKN (345 aa)) are catalytic. 2 residues coordinate substrate: Trp171 and Asn285. Catalysis depends on Glu286, which acts as the Proton donor/acceptor. Tyr361 provides a ligand contact to substrate. The Nucleophile role is filled by Glu395. Trp424 contributes to the substrate binding site.

It belongs to the glycosyl hydrolase 5 (cellulase A) family.

The protein localises to the secreted. The catalysed reaction is Random hydrolysis of (1-&gt;4)-beta-D-mannosidic linkages in mannans, galactomannans and glucomannans.. In terms of biological role, endo-1,4-mannanase, a crucial enzyme for depolymerization of seed galactomannans and wood galactoglucomannans. This chain is Probable mannan endo-1,4-beta-mannosidase F (manF), found in Aspergillus oryzae (strain ATCC 42149 / RIB 40) (Yellow koji mold).